The primary structure comprises 167 residues: RNA pyrophosphohydrolase (167 aa).

The 152-residue stretch at 8-159 (PYRTCVGVML…KRPVYERVVK (152 aa)) folds into the Nudix hydrolase domain. The Nudix box motif lies at 47 to 68 (GGVDPGEDTWAAAKRELYEETS).

It belongs to the Nudix hydrolase family. RppH subfamily. A divalent metal cation is required as a cofactor.

In terms of biological role, accelerates the degradation of transcripts by removing pyrophosphate from the 5'-end of triphosphorylated RNA, leading to a more labile monophosphorylated state that can stimulate subsequent ribonuclease cleavage. This Bradyrhizobium diazoefficiens (strain JCM 10833 / BCRC 13528 / IAM 13628 / NBRC 14792 / USDA 110) protein is RNA pyrophosphohydrolase.